A 75-amino-acid polypeptide reads, in one-letter code: Putative antitoxin VapB17 (75 aa).

In terms of biological role, putative antitoxin component of a possible type II toxin-antitoxin (TA) system. The cognate toxin is VapC17. In Mycobacterium tuberculosis (strain CDC 1551 / Oshkosh), this protein is Putative antitoxin VapB17 (vapB17).